The sequence spans 952 residues: MSDYKDTLNLPETGFPMRGNLANREPEMLKRWYDEDLYGEIRKAKKGKKSFVLHDGPPYANGDIHIGHALNKILKDIIIKSKTLSGFDAPYVPGWDCHGLPIELMVEKKKGKPGQKISAAEFREECRKYAAGQVEGQKESFKRLGVMGEWDKPYRTMDFGTEANIIRSLGKIADQGHLLKGFKPVHWCTDCGSALAEAEVEYQDKVSPSIDVRFVAADEAATLAKFSTPEGHQGEGELSVVIWTTTPWTLPANRAVALHADLEYVLVQVEAHGEQKAQRLILASELAKSVLDRANIEHYHNLGFAKGSDLELLQFNHPFYNFTVPAILGEHVTTDSGTGIVHTAPGHGQEDFVVGKKYDLEIANPVGSNGVYLPDTELFAGQHVFKANDSVLEVLKEKGALLHHHAYEHSYPHCWRHKTPIIFRATPQWFISMDQAGLRAKALEEVKSVEWMPEWGQNRIEGMIEGRPEWCISRQRTWGVPIALFVHKETAELHPDSLELIEKVAKLVEEKGIQAWWDVDAAELMGEEDAANYEKVLDTLDVWFDSGVTHFSVVDSREEYNFPEEERTHSADLYLEGSDQHRGWFQSSLISSVAMKGKAPYRQVLTHGFVVDGNGRKMSKSIGNVVAPKDVTNKLGADILRLWVASTDYTNEVAVSDEILKRSADAYRRIRNTARFFLANLSGFNPATDIVPAEEMVALDRWAVGRAFAAQQEIIKSYDEYNLHEVTQRLMHFCSIEMGSFYLDVIKDRQYTAKKGGHAQRSCQTALYYIVEALVRWMAPIMSFTADEIWNEMPGEREKFVFTGEWYQGLFDLAEGEEFNNEFWTEIQAVRASVNKLLEAARGEKVIGGALQAEVTLYADDALIAKINKLEDELRFVLLTSAATVKPLSEKTESAKATELDGLFVDVAASEAAKCERCWHHVADVGTIEGHEEVCGRCVSNVDGEGEERKFA.

The short motif at 58–68 (PYANGDIHIGH) is the 'HIGH' region element. An L-isoleucyl-5'-AMP-binding site is contributed by E576. The 'KMSKS' region signature appears at 617–621 (KMSKS). Residue K620 participates in ATP binding. Zn(2+) is bound by residues C915, C918, C935, and C938.

Belongs to the class-I aminoacyl-tRNA synthetase family. IleS type 1 subfamily. As to quaternary structure, monomer. Zn(2+) is required as a cofactor.

Its subcellular location is the cytoplasm. It catalyses the reaction tRNA(Ile) + L-isoleucine + ATP = L-isoleucyl-tRNA(Ile) + AMP + diphosphate. Catalyzes the attachment of isoleucine to tRNA(Ile). As IleRS can inadvertently accommodate and process structurally similar amino acids such as valine, to avoid such errors it has two additional distinct tRNA(Ile)-dependent editing activities. One activity is designated as 'pretransfer' editing and involves the hydrolysis of activated Val-AMP. The other activity is designated 'posttransfer' editing and involves deacylation of mischarged Val-tRNA(Ile). This chain is Isoleucine--tRNA ligase, found in Aliivibrio fischeri (strain ATCC 700601 / ES114) (Vibrio fischeri).